The sequence spans 358 residues: Dual-specificity RNA methyltransferase RlmN (358 aa).

Glutamate 91 acts as the Proton acceptor in catalysis. The 238-residue stretch at 98 to 335 (SQGRITQCLS…AIIRKSKGAD (238 aa)) folds into the Radical SAM core domain. A disulfide bond links cysteine 105 and cysteine 340. Cysteine 112, cysteine 116, and cysteine 119 together coordinate [4Fe-4S] cluster. S-adenosyl-L-methionine-binding positions include 164-165 (GE), serine 196, 219-221 (SLH), and asparagine 295. The active-site S-methylcysteine intermediate is the cysteine 340.

It belongs to the radical SAM superfamily. RlmN family. The cofactor is [4Fe-4S] cluster.

Its subcellular location is the cytoplasm. It catalyses the reaction adenosine(2503) in 23S rRNA + 2 reduced [2Fe-2S]-[ferredoxin] + 2 S-adenosyl-L-methionine = 2-methyladenosine(2503) in 23S rRNA + 5'-deoxyadenosine + L-methionine + 2 oxidized [2Fe-2S]-[ferredoxin] + S-adenosyl-L-homocysteine. The enzyme catalyses adenosine(37) in tRNA + 2 reduced [2Fe-2S]-[ferredoxin] + 2 S-adenosyl-L-methionine = 2-methyladenosine(37) in tRNA + 5'-deoxyadenosine + L-methionine + 2 oxidized [2Fe-2S]-[ferredoxin] + S-adenosyl-L-homocysteine. Functionally, specifically methylates position 2 of adenine 2503 in 23S rRNA and position 2 of adenine 37 in tRNAs. m2A2503 modification seems to play a crucial role in the proofreading step occurring at the peptidyl transferase center and thus would serve to optimize ribosomal fidelity. This Oleidesulfovibrio alaskensis (strain ATCC BAA-1058 / DSM 17464 / G20) (Desulfovibrio alaskensis) protein is Dual-specificity RNA methyltransferase RlmN.